A 117-amino-acid polypeptide reads, in one-letter code: Immunoglobulin heavy variable 1-46 (117 aa).

An N-terminal signal peptide occupies residues 1–19 (MDWTWRVFCLLAVAPGAHS). The segment at 20–44 (QVQLVQSGAEVKKPGASVKVSCKAS) is framework-1. Positions 20–117 (QVQLVQSGAE…EDTAVYYCAR (98 aa)) constitute an Ig-like domain. C41 and C115 form a disulfide bridge. Positions 45–52 (GYTFTSYY) are complementarity-determining-1. The framework-2 stretch occupies residues 53 to 69 (MHWVRQAPGQGLEWMGI). Residues 70–77 (INPSGGST) are complementarity-determining-2. The interval 78–115 (SYAQKFQGRVTMTRDTSTSTVYMELSSLRSEDTAVYYC) is framework-3. The segment at 116–117 (AR) is complementarity-determining-3.

Immunoglobulins are composed of two identical heavy chains and two identical light chains; disulfide-linked.

It localises to the secreted. Its subcellular location is the cell membrane. Its function is as follows. V region of the variable domain of immunoglobulin heavy chains that participates in the antigen recognition. Immunoglobulins, also known as antibodies, are membrane-bound or secreted glycoproteins produced by B lymphocytes. In the recognition phase of humoral immunity, the membrane-bound immunoglobulins serve as receptors which, upon binding of a specific antigen, trigger the clonal expansion and differentiation of B lymphocytes into immunoglobulins-secreting plasma cells. Secreted immunoglobulins mediate the effector phase of humoral immunity, which results in the elimination of bound antigens. The antigen binding site is formed by the variable domain of one heavy chain, together with that of its associated light chain. Thus, each immunoglobulin has two antigen binding sites with remarkable affinity for a particular antigen. The variable domains are assembled by a process called V-(D)-J rearrangement and can then be subjected to somatic hypermutations which, after exposure to antigen and selection, allow affinity maturation for a particular antigen. This is Immunoglobulin heavy variable 1-46 from Homo sapiens (Human).